Reading from the N-terminus, the 262-residue chain is Apolipoprotein A-Ia (262 aa).

The first 18 residues, 1-18 (MKFVALALTLLLALGSQA), serve as a signal peptide directing secretion. The 3 X approximate tandem repeats stretch occupies residues 32-63 (YKAAALVYLNQVKDQAEKALDNLDGTDYEQYK). 2 repeat units span residues 64 to 85 (LQLS…QALT) and 87 to 107 (YAET…ERVM). Residues 64-262 (LQLSESLTKL…YETIAKAIQA (199 aa)) form a 10 X approximate tandem repeats region. A 3; half-length repeat occupies 108 to 118 (TDVEDLRSKLE). 5 tandem repeats follow at residues 119–140 (PHRA…EKLE), 141–162 (PVFQ…AKLE), 163–184 (PLMD…SKVV), 185–206 (PMVE…TMAA), and 207–228 (PYAE…EKIA). One copy of the 9; half-length repeat lies at 229–239 (PHTQDLQTRME). Repeat unit 10 spans residues 240-262 (PYMENVRTTFAQMYETIAKAIQA).

The protein belongs to the apolipoprotein A1/A4/E family. In terms of assembly, homodimer. Interacts with naxe and yjefn3.

The protein resides in the secreted. Functionally, participates in the reverse transport of cholesterol from tissues to the liver for excretion by promoting cholesterol efflux from tissues and by acting as a cofactor for the lecithin cholesterol acyltransferase (LCAT). This chain is Apolipoprotein A-Ia, found in Danio rerio (Zebrafish).